Consider the following 418-residue polypeptide: Serpin A9 (418 aa).

An N-terminal signal peptide occupies residues 1-25 (MGSSSFYRVLLLVGFCAPIFCMLSS). Asparagine 103, asparagine 213, and asparagine 224 each carry an N-linked (GlcNAc...) asparagine glycan.

It belongs to the serpin family.

The protein resides in the secreted. The chain is Serpin A9 (Serpina9) from Mus musculus (Mouse).